The primary structure comprises 420 residues: Gamma-glutamyl phosphate reductase (420 aa).

Belongs to the gamma-glutamyl phosphate reductase family.

It localises to the cytoplasm. The enzyme catalyses L-glutamate 5-semialdehyde + phosphate + NADP(+) = L-glutamyl 5-phosphate + NADPH + H(+). It functions in the pathway amino-acid biosynthesis; L-proline biosynthesis; L-glutamate 5-semialdehyde from L-glutamate: step 2/2. Its function is as follows. Catalyzes the NADPH-dependent reduction of L-glutamate 5-phosphate into L-glutamate 5-semialdehyde and phosphate. The product spontaneously undergoes cyclization to form 1-pyrroline-5-carboxylate. In Streptococcus pneumoniae (strain P1031), this protein is Gamma-glutamyl phosphate reductase.